Reading from the N-terminus, the 220-residue chain is Protein-L-isoaspartate O-methyltransferase (220 aa).

The active site involves S65.

The protein belongs to the methyltransferase superfamily. L-isoaspartyl/D-aspartyl protein methyltransferase family.

The protein resides in the cytoplasm. It carries out the reaction [protein]-L-isoaspartate + S-adenosyl-L-methionine = [protein]-L-isoaspartate alpha-methyl ester + S-adenosyl-L-homocysteine. In terms of biological role, catalyzes the methyl esterification of L-isoaspartyl residues in peptides and proteins that result from spontaneous decomposition of normal L-aspartyl and L-asparaginyl residues. It plays a role in the repair and/or degradation of damaged proteins. In Pyrococcus horikoshii (strain ATCC 700860 / DSM 12428 / JCM 9974 / NBRC 100139 / OT-3), this protein is Protein-L-isoaspartate O-methyltransferase (pcm).